A 151-amino-acid chain; its full sequence is 18 kDa heat shock protein (151 aa).

In terms of domain architecture, sHSP spans 38–151 (TFNGNAGFKV…KDNGRRIDIH (114 aa)).

The protein belongs to the small heat shock protein (HSP20) family.

In terms of biological role, probable chaperone. This Clostridium acetobutylicum (strain ATCC 824 / DSM 792 / JCM 1419 / IAM 19013 / LMG 5710 / NBRC 13948 / NRRL B-527 / VKM B-1787 / 2291 / W) protein is 18 kDa heat shock protein (hsp18).